A 149-amino-acid chain; its full sequence is MKCPFCGHLETQVVETRISEDAEFIRRRRQCGACEKRFTTYERPDVSFPSIVKKDGRRTDYQRGKILGSMRLALRKRPVSTAQIDAAVEQIEEKLLSLGLREVASSRLGELVMLELKKLDKIAYIRFASVYRSFEDIDEFKTLVDEVGR.

The segment at 3-34 (CPFCGHLETQVVETRISEDAEFIRRRRQCGAC) is a zinc-finger region. The region spanning 49-139 (PSIVKKDGRR…VYRSFEDIDE (91 aa)) is the ATP-cone domain.

Belongs to the NrdR family. Requires Zn(2+) as cofactor.

Functionally, negatively regulates transcription of bacterial ribonucleotide reductase nrd genes and operons by binding to NrdR-boxes. The sequence is that of Transcriptional repressor NrdR from Polaromonas naphthalenivorans (strain CJ2).